The following is a 662-amino-acid chain: Sodium/glucose cotransporter 1 (662 aa).

The Extracellular segment spans residues M1 to R24. The chain crosses the membrane as a helical span at residues N25 to M47. The Cytoplasmic portion of the chain corresponds to C48–V66. A helical membrane pass occupies residues W67–T90. At G91–G95 the chain is on the extracellular side. The helical transmembrane segment at I96–V117 threads the bilayer. Over P118–K139 the chain is Cytoplasmic. A helical transmembrane segment spans residues R140–I169. The Extracellular segment spans residues T170–D176. Residues L177–I193 traverse the membrane as a helical segment. At T194–Y202 the chain is on the cytoplasmic side. Residues T203–F221 traverse the membrane as a helical segment. Residues A222–P275 lie on the Extracellular side of the membrane. Residue N248 is glycosylated (N-linked (GlcNAc...) asparagine). Intrachain disulfides connect C255–C511, C255–C608, C345–C351, C355–C361, and C517–C522. Residues W276 to Q295 traverse the membrane as a helical segment. Residues V296 to H309 are Cytoplasmic-facing. A helical membrane pass occupies residues V310–P331. Topologically, residues G332–P375 are extracellular. A helical transmembrane segment spans residues N376–T406. The Cytoplasmic segment spans residues M407–L422. The helical transmembrane segment at M423–V444 threads the bilayer. Residues Q445–Q451 lie on the Extracellular side of the membrane. A helical transmembrane segment spans residues L452–C477. The Cytoplasmic portion of the chain corresponds to K478–N481. The chain crosses the membrane as a helical span at residues E482–F504. The Extracellular portion of the chain corresponds to A505–H525. The helical transmembrane segment at Y526 to F547 threads the bilayer. Over T548–V642 the chain is Cytoplasmic. T587 carries the post-translational modification Phosphothreonine. A helical membrane pass occupies residues V643–Y660. The Extracellular portion of the chain corresponds to F661 to A662.

It belongs to the sodium:solute symporter (SSF) (TC 2.A.21) family. N-glycosylation is not necessary for the cotransporter function.

It localises to the apical cell membrane. It catalyses the reaction D-glucose(out) + 2 Na(+)(out) = D-glucose(in) + 2 Na(+)(in). The enzyme catalyses D-galactose(out) + 2 Na(+)(out) = D-galactose(in) + 2 Na(+)(in). Its activity is regulated as follows. Enhanced by the interaction with PDZK1IP1/MAP17; but unlike SLC5A2/SGLT2, PDZK1IP1 is not essential for SLC5A1 transporter activity. Possibly modulated by cholesterol binding. In terms of biological role, electrogenic Na(+)-coupled sugar symporter that actively transports D-glucose or D-galactose at the plasma membrane, with a Na(+) to sugar coupling ratio of 2:1. Transporter activity is driven by a transmembrane Na(+) electrochemical gradient set by the Na(+)/K(+) pump. Has a primary role in the transport of dietary monosaccharides from enterocytes to blood. Responsible for the absorption of D-glucose or D-galactose across the apical brush-border membrane of enterocytes, whereas basolateral exit is provided by GLUT2. Additionally, functions as a D-glucose sensor in enteroendocrine cells, triggering the secretion of the incretins GCG and GIP that control food intake and energy homeostasis. Together with SGLT2, functions in reabsorption of D-glucose from glomerular filtrate, playing a nonredundant role in the S3 segment of the proximal tubules. Transports D-glucose into endometrial epithelial cells, controlling glycogen synthesis and nutritional support for the embryo as well as the decidual transformation of endometrium prior to conception. Acts as a water channel enabling passive water transport in response to the osmotic gradient created upon sugar and Na(+) uptake. Has high water conductivity comparable to aquaporins and therefore is expected to play an important role in transepithelial water permeability, especially in the small intestine. The sequence is that of Sodium/glucose cotransporter 1 (SLC5A1) from Sus scrofa (Pig).